The sequence spans 193 residues: Imidazoleglycerol-phosphate dehydratase (193 aa).

This sequence belongs to the imidazoleglycerol-phosphate dehydratase family.

It localises to the cytoplasm. It carries out the reaction D-erythro-1-(imidazol-4-yl)glycerol 3-phosphate = 3-(imidazol-4-yl)-2-oxopropyl phosphate + H2O. The protein operates within amino-acid biosynthesis; L-histidine biosynthesis; L-histidine from 5-phospho-alpha-D-ribose 1-diphosphate: step 6/9. In Sulfolobus acidocaldarius (strain ATCC 33909 / DSM 639 / JCM 8929 / NBRC 15157 / NCIMB 11770), this protein is Imidazoleglycerol-phosphate dehydratase.